The following is an 892-amino-acid chain: Alpha-actinin-1 (892 aa).

Methionine 1 carries the N-acetylmethionine modification. The tract at residues 1-247 (MDHYDSQQTN…IMTYVSSFYH (247 aa)) is actin-binding. Phosphoserine is present on serine 6. Tyrosine 12 carries the phosphotyrosine; by FAK1 modification. 2 Calponin-homology (CH) domains span residues 31–135 (KQQR…LRFA) and 144–250 (TSAK…HAFS). Lysine 95 and lysine 195 each carry N6-acetyllysine. Spectrin repeat units follow at residues 274–384 (QLME…WLLN), 394–499 (HLAE…ALER), 509–620 (QLYL…ALTE), and 630–733 (RLRK…EVEN). Positions 274 to 733 (QLMEDYEKLA…IARTINEVEN (460 aa)) are interaction with DDN. Phosphoserine is present on serine 471. Position 676 is an N6-acetyllysine (lysine 676). Serine 677 is subject to Phosphoserine. 2 EF-hand domains span residues 746-781 (EQMNEFRASFNHFDRDHSGTLGPEEFKACLISLGYD) and 787-822 (QGEAEFARIMSIVDPNRLGVVTFQAFIDFMSRETAD). Positions 759, 761, 763, 765, and 770 each coordinate Ca(2+). A Phosphoserine modification is found at serine 890.

Belongs to the alpha-actinin family. Homodimer; antiparallel. Interacts with MYOZ2, TTID and LPP. Interacts with DDN. Interacts with PSD. Interacts with MICALL2. Interacts with DNM2 and CTTN. Interacts with PDLIM1. Interacts with PDLIM2. Interacts with PDLIM4 (via PDZ domain). Interacts with IGSF8.

It is found in the cytoplasm. It localises to the cytoskeleton. The protein localises to the myofibril. Its subcellular location is the sarcomere. The protein resides in the z line. It is found in the cell membrane. It localises to the cell junction. The protein localises to the cell projection. Its subcellular location is the ruffle. F-actin cross-linking protein which is thought to anchor actin to a variety of intracellular structures. Association with IGSF8 regulates the immune synapse formation and is required for efficient T-cell activation. In Mus musculus (Mouse), this protein is Alpha-actinin-1 (Actn1).